Reading from the N-terminus, the 2531-residue chain is Highly reducing polyketide synthase ausV (2531 aa).

The 426-residue stretch at 7-432 folds into the Ketosynthase family 3 (KS3) domain; sequence STPIAIIGLS…GTNAHCVMET (426 aa). Catalysis depends on for beta-ketoacyl synthase activity residues cysteine 180, histidine 315, and histidine 355. Positions 554 to 882 are malonyl-CoA:ACP transacylase (MAT) domain; that stretch reads FVFTGQGAQW…HHTLLESMGS (329 aa). The active-site For malonyltransferase activity is serine 644. An N-terminal hotdog fold region spans residues 939-1069; sequence HDLCGIRVED…GSVLAGTPSD (131 aa). A PKS/mFAS DH domain is found at 939-1238; the sequence is HDLCGIRVED…LATLSVRSGD (300 aa). Positions 940–1236 are dehydratase (DH) domain; it reads DLCGIRVEDD…LELATLSVRS (297 aa). The active-site Proton acceptor; for dehydratase activity is histidine 971. A C-terminal hotdog fold region spans residues 1087-1238; sequence YVETTPRQAY…LATLSVRSGD (152 aa). The active-site Proton donor; for dehydratase activity is aspartate 1152. The tract at residues 1414–1592 is methyltransferase (CMet) domain; that stretch reads SSYLRLHARN…DTGFSGVDIS (179 aa). The segment at 1832–2133 is enoyl reductase (ER) domain; that stretch reads LRFVQDPAYW…SGGAKPGCSR (302 aa). The segment at 2156–2331 is ketoreductase (KR) domain; sequence HGRALVPDFH…AGVSLSLGFI (176 aa). A Carrier domain is found at 2444–2521; that stretch reads AAATAVLDAL…ELARDLALRS (78 aa). The residue at position 2481 (serine 2481) is an O-(pantetheine 4'-phosphoryl)serine.

The protein operates within secondary metabolite biosynthesis; terpenoid biosynthesis. Its function is as follows. Highly reducing polyketide synthase; part of the gene cluster that mediates the biosynthesis of calidodehydroaustin, a fungal meroterpenoid. The first step of the pathway is the synthesis of 3,5-dimethylorsellinic acid by the polyketide synthase ausA. 3,5-dimethylorsellinic acid is then prenylated by the polyprenyl transferase ausN. Further epoxidation by the FAD-dependent monooxygenase ausM and cyclization by the probable terpene cyclase ausL lead to the formation of protoaustinoid A. Protoaustinoid A is then oxidized to spiro-lactone preaustinoid A3 by the combined action of the FAD-binding monooxygenases ausB and ausC, and the dioxygenase ausE. Acid-catalyzed keto-rearrangement and ring contraction of the tetraketide portion of preaustinoid A3 by ausJ lead to the formation of preaustinoid A4. The aldo-keto reductase ausK, with the help of ausH, is involved in the next step by transforming preaustinoid A4 into isoaustinone which is in turn hydroxylated by the P450 monooxygenase ausI to form austinolide. The cytochrome P450 monooxygenase ausG modifies austinolide to austinol. Austinol is further acetylated to austin by the O-acetyltransferase ausP, which spontaneously changes to dehydroaustin. The cytochrome P450 monooxygenase ausR then converts dehydroaustin is into 7-dehydrodehydroaustin. The hydroxylation catalyzed by ausR permits the O-acetyltransferase ausQ to add an additional acetyl group to the molecule, leading to the formation of acetoxydehydroaustin. The short chain dehydrogenase ausT catalyzes the reduction of the double bond present between carbon atoms 1 and 2 to convert 7-dehydrodehydroaustin into 1,2-dihydro-7-hydroxydehydroaustin. AusQ catalyzes not only an acetylation reaction but also the addition of the PKS ausV diketide product to 1,2-dihydro-7-hydroxydehydroaustin, forming precalidodehydroaustin. Finally, the iron/alpha-ketoglutarate-dependent dioxygenase converts precalidodehydroaustin into calidodehydroaustin. This Aspergillus calidoustus protein is Highly reducing polyketide synthase ausV.